The sequence spans 269 residues: 2-dehydro-3-deoxyphosphooctonate aldolase (269 aa).

This sequence belongs to the KdsA family.

Its subcellular location is the cytoplasm. The catalysed reaction is D-arabinose 5-phosphate + phosphoenolpyruvate + H2O = 3-deoxy-alpha-D-manno-2-octulosonate-8-phosphate + phosphate. It participates in carbohydrate biosynthesis; 3-deoxy-D-manno-octulosonate biosynthesis; 3-deoxy-D-manno-octulosonate from D-ribulose 5-phosphate: step 2/3. The protein operates within bacterial outer membrane biogenesis; lipopolysaccharide biosynthesis. The chain is 2-dehydro-3-deoxyphosphooctonate aldolase from Chlamydia abortus (strain DSM 27085 / S26/3) (Chlamydophila abortus).